The following is a 340-amino-acid chain: MSELEQLRQEAEQLRNQIQDARKACNDATLVQITSNMDSVGRIQMRTRRTLRGHLAKIYAMHWGYDSRLLVSASQDGKLIIWDSYTTNKMHAIPLRSSWVMTCAYAPSGNYVACGGLDNICSIYNLKTREGNVRVSRELPGHTGYLSCCRFLDDGQIITSSGDTTCALWDIETGQQTTTFTGHSGDVMSLSLSPDLKTFVSGACDASSKLWDIRDGMCRQSFTGHISDINAVSFFPSGYAFATGSDDATCRLFDLRADQELLLYSHDNIICGITSVAFSKSGRLLLAGYDDFNCSVWDALKGGRAGVLAGHDNRVSCLGVTDDGMAVATGSWDSFLRIWN.

The residue at position 2 (Ser2) is an N-acetylserine. Ser2 carries the post-translational modification Phosphoserine. WD repeat units lie at residues 53 to 92, 95 to 134, 141 to 179, 182 to 221, and 224 to 263; these read GHLA…KMHA, LRSS…GNVR, GHTG…QTTT, GHSG…CRQS, and GHIS…ELLL. His266 bears the Phosphohistidine mark. 2 WD repeats span residues 268–307 and 310–339; these read NIIC…RAGV and GHDN…LRIW.

Belongs to the WD repeat G protein beta family. G proteins are composed of 3 units, alpha, beta and gamma. In terms of tissue distribution, widely expressed in the brain. Highest levels found in the hippocampus and layers v and vi of the neocortex.

Its function is as follows. Guanine nucleotide-binding proteins (G proteins) are involved as a modulator or transducer in various transmembrane signaling systems. The beta and gamma chains are required for the GTPase activity, for replacement of GDP by GTP, and for G protein-effector interaction. This is Guanine nucleotide-binding protein subunit beta-4 (Gnb4) from Rattus norvegicus (Rat).